We begin with the raw amino-acid sequence, 231 residues long: Large ribosomal subunit protein uL1 (231 aa).

This sequence belongs to the universal ribosomal protein uL1 family. In terms of assembly, part of the 50S ribosomal subunit.

In terms of biological role, binds directly to 23S rRNA. The L1 stalk is quite mobile in the ribosome, and is involved in E site tRNA release. Protein L1 is also a translational repressor protein, it controls the translation of the L11 operon by binding to its mRNA. The sequence is that of Large ribosomal subunit protein uL1 from Cellvibrio japonicus (strain Ueda107) (Pseudomonas fluorescens subsp. cellulosa).